The following is a 48-amino-acid chain: Large ribosomal subunit protein eL40 (48 aa).

Belongs to the eukaryotic ribosomal protein eL40 family.

In Methanobrevibacter smithii (strain ATCC 35061 / DSM 861 / OCM 144 / PS), this protein is Large ribosomal subunit protein eL40.